The primary structure comprises 27 residues: iraD leader peptide (27 aa).

In terms of biological role, a short protein whose stop codon overlaps with the start codon of downstream iraD; its mRNA secondary structure is predicted to fold and sequester the Shine-Dalgarno sequence of iraD. When this protein is expressed the downstream iraD is also expressed due to ribosomal coupling. The polypeptide is iraD leader peptide (idlP) (Escherichia coli (strain K12)).